A 706-amino-acid polypeptide reads, in one-letter code: Maternal embryonic leucine zipper kinase (706 aa).

A Protein kinase domain is found at 11–265; it reads YAVHDELGSG…VKKLLEHDWL (255 aa). ATP is bound by residues 17–25 and K40; that span reads LGSGGFGKV. Catalysis depends on D132, which acts as the Proton acceptor. Disordered stretches follow at residues 366–386, 433–493, and 506–555; these read LDKSGLEDDDSDPSSISSSSD, FTGR…SRGP, and SVYT…IGSA. Polar residues-rich tracts occupy residues 447–461 and 506–515; these read SVRSSDSASLGSAAT and SVYTTPNTRP. The KA1 domain maps to 656–705; that stretch reads QETVHGWMTVELEIVRLQMFDKVGIRRKRLKGDAFMYKKVCEKILQMAKI.

The protein belongs to the protein kinase superfamily. CAMK Ser/Thr protein kinase family. SNF1 subfamily. Post-translationally, may be phosphorylated at Thr-169 by par-4 and/or autophosphorylated which likely results in its activation. Phosphorylation is not required for co-localization with the centrosome.

It localises to the cytoplasm. Its subcellular location is the cytoskeleton. It is found in the microtubule organizing center. The protein localises to the centrosome. It carries out the reaction L-seryl-[protein] + ATP = O-phospho-L-seryl-[protein] + ADP + H(+). The catalysed reaction is L-threonyl-[protein] + ATP = O-phospho-L-threonyl-[protein] + ADP + H(+). Its function is as follows. Serine/threonine-protein kinase involved in cell autonomous neuroblast asymmetric divisions that generate one precursor cell and one apoptotic cell by controlling spindle positioning, myosin distribution and the segregation of cell fate determinants. Plays a role in neural fate specification in several dopaminergic linages, acting in concert with ham-1. Involved in phosphorylation of multiple proteins associated with key developmental processes, including the cell cycle, apoptosis, endocytosis, and asymmetric cell division. Promotes cell shedding during embryogenesis, probably through the endocytosis-mediated removal of cell adhesion molecules such as hmp-1 from the cell surface. May act downstream of par-4/strd-1/mop-25 to regulate cell shedding. This is Maternal embryonic leucine zipper kinase from Caenorhabditis elegans.